Here is a 378-residue protein sequence, read N- to C-terminus: Alanine racemase (378 aa).

Lysine 40 serves as the catalytic Proton acceptor; specific for D-alanine. Lysine 40 is subject to N6-(pyridoxal phosphate)lysine. Arginine 140 serves as a coordination point for substrate. Residue tyrosine 270 is the Proton acceptor; specific for L-alanine of the active site. Methionine 317 is a binding site for substrate.

Belongs to the alanine racemase family. It depends on pyridoxal 5'-phosphate as a cofactor.

The enzyme catalyses L-alanine = D-alanine. Its pathway is amino-acid biosynthesis; D-alanine biosynthesis; D-alanine from L-alanine: step 1/1. Catalyzes the interconversion of L-alanine and D-alanine. May also act on other amino acids. The sequence is that of Alanine racemase (alr) from Lacticaseibacillus casei (strain BL23) (Lactobacillus casei).